The following is a 97-amino-acid chain: Defensin-like protein 245 (97 aa).

A signal peptide spans 1–24; the sequence is MKFAAILLVTCVLFSLLPSHLSQG. Disulfide bonds link cysteine 39-cysteine 96, cysteine 50-cysteine 79, cysteine 58-cysteine 89, and cysteine 77-cysteine 91.

This sequence belongs to the DEFL family. Flower buds and roots.

Its subcellular location is the secreted. The sequence is that of Defensin-like protein 245 (SCRL4) from Arabidopsis thaliana (Mouse-ear cress).